The sequence spans 396 residues: Putative cystathionine beta-lyase (396 aa).

N6-(pyridoxal phosphate)lysine is present on K210.

The protein belongs to the trans-sulfuration enzymes family. It depends on pyridoxal 5'-phosphate as a cofactor.

It carries out the reaction L,L-cystathionine + H2O = L-homocysteine + pyruvate + NH4(+). It catalyses the reaction an S-substituted L-cysteine + H2O = a thiol + pyruvate + NH4(+). The protein operates within amino-acid biosynthesis; L-methionine biosynthesis via de novo pathway; L-homocysteine from L-cystathionine: step 1/1. Functionally, catalyzes the cleavage of cystathionine to homocysteine, pyruvate and ammonia during methionine biosynthesis. The chain is Putative cystathionine beta-lyase (metC) from Rhizobium johnstonii (strain DSM 114642 / LMG 32736 / 3841) (Rhizobium leguminosarum bv. viciae).